The chain runs to 274 residues: MLSVAARSGPFAPVLSATSRGVAXXXXXXXXXXXXXTPQPPVLDPKRPILSRESLSGQAARRPLVATVGLNVPASVRYSHTDIKVPDFSDYRRSEVLDTTKSSRESSDARKGFSYLVTATTAVGVTYAAKSIVTQFVSSMSASADVLAMSKIEIKLSDIPEGKNMAFKWRGKPLFVRHRTQKEIEQEAAVELSQLRDPQHDLDRVKKPEWMILIGVCTHLGCVPIANAGDFGGYYCPCHGSHYDASGRIRKGPAPLNLEVPTYEFTSDDLVIVG.

Over 79-103 (SHTDIKVPDFSDYRRSEVLDTTKSS) the chain is Mitochondrial matrix. The chain crosses the membrane as a helical span at residues 104–140 (RESSDARKGFSYLVTATTAVGVTYAAKSIVTQFVSSM). Over 141 to 274 (SASADVLAMS…FTSDDLVIVG (134 aa)) the chain is Mitochondrial intermembrane. The Rieske domain maps to 187-272 (EAAVELSQLR…YEFTSDDLVI (86 aa)). Residues Cys-217, His-219, Cys-236, His-239, and Ser-241 each contribute to the [2Fe-2S] cluster site. An intrachain disulfide couples Cys-222 to Cys-238.

This sequence belongs to the Rieske iron-sulfur protein family. In terms of assembly, component of the ubiquinol-cytochrome c oxidoreductase (cytochrome b-c1 complex, complex III, CIII), a multisubunit enzyme composed of 11 subunits. The complex is composed of 3 respiratory subunits cytochrome b, cytochrome c1 and Rieske protein UQCRFS1, 2 core protein subunits UQCRC1/QCR1 and UQCRC2/QCR2, and 6 low-molecular weight protein subunits UQCRH/QCR6, UQCRB/QCR7, UQCRQ/QCR8, UQCR10/QCR9, UQCR11/QCR10 and subunit 9, the cleavage product of Rieske protein UQCRFS1. The complex exists as an obligatory dimer and forms supercomplexes (SCs) in the inner mitochondrial membrane with NADH-ubiquinone oxidoreductase (complex I, CI) and cytochrome c oxidase (complex IV, CIV), resulting in different assemblies (supercomplex SCI(1)III(2)IV(1) and megacomplex MCI(2)III(2)IV(2)). Incorporation of the Rieske protein UQCRFS1 is the penultimate step in complex III assembly. Interacts with TTC19, which is involved in the clearance of UQCRFS1 fragments. As to quaternary structure, component of the ubiquinol-cytochrome c oxidoreductase (cytochrome b-c1 complex, complex III, CIII). Subunit 9 corresponds to the mitochondrial targeting sequence (MTS) of Rieske protein UQCRFS1. It is retained after processing and incorporated inside complex III, where it remains bound to the complex and localizes between the 2 core subunits UQCRC1/QCR1 and UQCRC2/QCR2. It depends on [2Fe-2S] cluster as a cofactor. Proteolytic processing is necessary for the correct insertion of UQCRFS1 in the complex III dimer. Several fragments are generated during UQCRFS1 insertion, most probably due to the endogenous matrix-processing peptidase (MPP) activity of the 2 core protein subunits UQCRC1/QCR1 and UQCRC2/QCR2, which are homologous to the 2 mitochondrial-processing peptidase (MPP) subunits beta-MPP and alpha-MPP respectively. The action of the protease is also necessary for the clearance of the UQCRFS1 fragments.

The protein resides in the mitochondrion inner membrane. It catalyses the reaction a quinol + 2 Fe(III)-[cytochrome c](out) = a quinone + 2 Fe(II)-[cytochrome c](out) + 2 H(+)(out). Component of the ubiquinol-cytochrome c oxidoreductase, a multisubunit transmembrane complex that is part of the mitochondrial electron transport chain which drives oxidative phosphorylation. The respiratory chain contains 3 multisubunit complexes succinate dehydrogenase (complex II, CII), ubiquinol-cytochrome c oxidoreductase (cytochrome b-c1 complex, complex III, CIII) and cytochrome c oxidase (complex IV, CIV), that cooperate to transfer electrons derived from NADH and succinate to molecular oxygen, creating an electrochemical gradient over the inner membrane that drives transmembrane transport and the ATP synthase. The cytochrome b-c1 complex catalyzes electron transfer from ubiquinol to cytochrome c, linking this redox reaction to translocation of protons across the mitochondrial inner membrane, with protons being carried across the membrane as hydrogens on the quinol. In the process called Q cycle, 2 protons are consumed from the matrix, 4 protons are released into the intermembrane space and 2 electrons are passed to cytochrome c. The Rieske protein is a catalytic core subunit containing a [2Fe-2S] iron-sulfur cluster. It cycles between 2 conformational states during catalysis to transfer electrons from the quinol bound in the Q(0) site in cytochrome b to cytochrome c1. Incorporation of UQCRFS1 is the penultimate step in complex III assembly. Its function is as follows. Component of the ubiquinol-cytochrome c oxidoreductase (cytochrome b-c1 complex, complex III, CIII). UQCRFS1 undergoes proteolytic processing once it is incorporated in the complex III dimer. One of the fragments, called subunit 9, corresponds to its mitochondrial targeting sequence (MTS). The proteolytic processing is necessary for the correct insertion of UQCRFS1 in the complex III dimer, but the persistence of UQCRFS1-derived fragments may prevent newly imported UQCRFS1 to be processed and assembled into complex III and is detrimental for the complex III structure and function. This chain is Cytochrome b-c1 complex subunit Rieske, mitochondrial (UQCRFS1), found in Aotus azarae (Azara's night monkey).